The following is a 168-amino-acid chain: tRNA (cytidine(56)-2'-O)-methyltransferase (168 aa).

Residues L79 and 104–108 (GAEKV) each bind S-adenosyl-L-methionine.

This sequence belongs to the aTrm56 family. As to quaternary structure, homodimer.

The protein localises to the cytoplasm. It catalyses the reaction cytidine(56) in tRNA + S-adenosyl-L-methionine = 2'-O-methylcytidine(56) in tRNA + S-adenosyl-L-homocysteine + H(+). Functionally, specifically catalyzes the AdoMet-dependent 2'-O-ribose methylation of cytidine at position 56 in tRNAs. In Archaeoglobus fulgidus (strain ATCC 49558 / DSM 4304 / JCM 9628 / NBRC 100126 / VC-16), this protein is tRNA (cytidine(56)-2'-O)-methyltransferase.